The sequence spans 33 residues: Gastrin (33 aa).

Gln1 is modified (pyrrolidone carboxylic acid). At Phe33 the chain carries Phenylalanine amide.

Belongs to the gastrin/cholecystokinin family.

The protein localises to the secreted. Functionally, gastrin stimulates the stomach mucosa to produce and secrete hydrochloric acid and the pancreas to secrete its digestive enzymes. It also stimulates smooth muscle contraction and increases blood circulation and water secretion in the stomach and intestine. This chain is Gastrin (GAST), found in Cavia porcellus (Guinea pig).